A 344-amino-acid chain; its full sequence is Dihydroorotate dehydrogenase (quinone) (344 aa).

FMN is bound by residues 65-69 (AGLDK) and Thr-89. Residue Lys-69 participates in substrate binding. 114-118 (NRMGF) contributes to the substrate binding site. Asn-145 and Asn-178 together coordinate FMN. Position 178 (Asn-178) interacts with substrate. Ser-181 (nucleophile) is an active-site residue. Asn-183 contributes to the substrate binding site. Residues Lys-223 and Thr-251 each contribute to the FMN site. 252–253 (NT) is a binding site for substrate. FMN-binding positions include Gly-274, Gly-303, and 324–325 (YS).

The protein belongs to the dihydroorotate dehydrogenase family. Type 2 subfamily. In terms of assembly, monomer. The cofactor is FMN.

Its subcellular location is the cell membrane. It catalyses the reaction (S)-dihydroorotate + a quinone = orotate + a quinol. The protein operates within pyrimidine metabolism; UMP biosynthesis via de novo pathway; orotate from (S)-dihydroorotate (quinone route): step 1/1. Catalyzes the conversion of dihydroorotate to orotate with quinone as electron acceptor. The chain is Dihydroorotate dehydrogenase (quinone) from Cupriavidus pinatubonensis (strain JMP 134 / LMG 1197) (Cupriavidus necator (strain JMP 134)).